Here is an 877-residue protein sequence, read N- to C-terminus: MHPFSQLFRNIQSLGEEEVQELLGPPEDALPLLAGEDLNHRVAGLNLQLPTADLDWVHQTNAITGLYSTQTAKFNPEWKQPDFPKIHLSEDLFLNYNNFCGPLTVNEKRKLKLNFPARFFPKATKYFPLSKGIKNNYPDFSIEHFFAAATYLWTLWESGILYLRKNQTTLTFKGKPYSWGHRQLEQHNGQQHESHLQSRESSSMVASSGHILHKQHASGPSSFPTRDLPNNFFGESQKSARTGGSVREKIQTNRLGFPGKSKITIGQQGSSQVSSPRSKSSNFRNQTQANHSSWNQRHPTWYSTTSNTTQSRQREETYSSDSAFKRHSPSFEHEKSEPSSSGLCGGTESLNNTGTSTFCLWRSFYNTEPCGAYCLHHIVSSLEDWGPCTISGDVTIRSPRTPRRITGGVFLVDKHPHNSSESRLVVDFSQFSRGHTRVHWPKFAVLNLQALANLLSTNLQWLSLDVSAAFYHIPVSPAAVPHLLVGSPGLERFTPSMSHTTIHGNNSKLQTMHNLCSRHLFNSLLLLFKTYGRKLHLLAHPFIMGFRKLPMGVGLSPFLLAQFTSALASMVRRNFPHCVAFAYMDDLVLGARTHEHLTAIYSHICSVFLDLGIHLNVAKTKWWGHHLHFMGYVITGAGILPQDKHVQKVSTYLKSIPLNKPLDYKICERLTGILNYVAPFTKCGYAALLPLYQATSRTAFVFSSLYHSWLLSLYAELWPVARQRGVVCSVSDATPTGWGICTTYQLISPTGAFALPIATADVIAACLARCWTGARLLGTDNSVVLSGKLTSYPWLLACVANWILRGTSFCYVPSAANPADLPSRGLLPALHPVPTLRFRPQLSRISLWAASPPVSPRRPVRVAWASPVQNSEPWFPP.

The terminal protein domain (TP) stretch occupies residues 1-183; sequence MHPFSQLFRN…GKPYSWGHRQ (183 aa). The spacer stretch occupies residues 184–382; it reads LEQHNGQQHE…YCLHHIVSSL (199 aa). The segment covering 185-198 has biased composition (basic and acidic residues); sequence EQHNGQQHESHLQS. The disordered stretch occupies residues 185 to 347; the sequence is EQHNGQQHES…PSSSGLCGGT (163 aa). Positions 233–242 are enriched in polar residues; the sequence is FGESQKSART. Over residues 267 to 281 the composition is skewed to low complexity; the sequence is QQGSSQVSSPRSKSS. Polar residues-rich tracts occupy residues 282–302 and 338–347; these read NFRNQTQANHSSWNQRHPTWY and PSSSGLCGGT. The tract at residues 383 to 723 is polymerase/reverse transcriptase domain (RT); it reads EDWGPCTISG…YAELWPVARQ (341 aa). The 242-residue stretch at 393–634 folds into the Reverse transcriptase domain; that stretch reads DVTIRSPRTP…HHLHFMGYVI (242 aa). Mg(2+) is bound by residues Asp-465, Asp-585, and Asp-586.

The protein belongs to the hepadnaviridae P protein family.

It carries out the reaction DNA(n) + a 2'-deoxyribonucleoside 5'-triphosphate = DNA(n+1) + diphosphate. It catalyses the reaction Endonucleolytic cleavage to 5'-phosphomonoester.. Activated by host HSP70 and HSP40 in vitro to be able to bind the epsilon loop of the pgRNA. Because deletion of the RNase H region renders the protein partly chaperone-independent, the chaperones may be needed indirectly to relieve occlusion of the RNA-binding site by this domain. Inhibited by several reverse-transcriptase inhibitors: Lamivudine, Adefovir and Entecavir. In terms of biological role, multifunctional enzyme that converts the viral RNA genome into dsDNA in viral cytoplasmic capsids. This enzyme displays a DNA polymerase activity that can copy either DNA or RNA templates, and a ribonuclease H (RNase H) activity that cleaves the RNA strand of RNA-DNA heteroduplexes in a partially processive 3'- to 5'-endonucleasic mode. Neo-synthesized pregenomic RNA (pgRNA) are encapsidated together with the P protein, and reverse-transcribed inside the nucleocapsid. Initiation of reverse-transcription occurs first by binding the epsilon loop on the pgRNA genome, and is initiated by protein priming, thereby the 5'-end of (-)DNA is covalently linked to P protein. Partial (+)DNA is synthesized from the (-)DNA template and generates the relaxed circular DNA (RC-DNA) genome. After budding and infection, the RC-DNA migrates in the nucleus, and is converted into a plasmid-like covalently closed circular DNA (cccDNA). The activity of P protein does not seem to be necessary for cccDNA generation, and is presumably released from (+)DNA by host nuclear DNA repair machinery. The sequence is that of Protein P from Arctic squirrel hepatitis virus (ASHV).